A 122-amino-acid chain; its full sequence is uncharacterized protein (122 aa).

This is an uncharacterized protein from Bacillus subtilis (strain 168).